Reading from the N-terminus, the 545-residue chain is Solute carrier family 22 member 6 (545 aa).

Residues 1-9 are Cytoplasmic-facing; the sequence is MAFNDLLKQ. Residues 10-30 traverse the membrane as a helical segment; sequence VGGVGRFQLIQVTMVVAPLLL. Residues 31 to 129 lie on the Extracellular side of the membrane; sequence MASHNTLQNF…LVCSHRAFRQ (99 aa). N-linked (GlcNAc...) asparagine glycans are attached at residues Asn39, Asn56, Asn86, Asn91, and Asn107. Residues 130 to 150 form a helical membrane-spanning segment; the sequence is LAQSLFMVGVLLGAMMFGYLA. The Cytoplasmic segment spans residues 151–157; sequence DRLGRRK. The chain crosses the membrane as a helical span at residues 158 to 177; that stretch reads VLILNYLQTAVSGTCAAYAP. Residue Asn178 is glycosylated (N-linked (GlcNAc...) asparagine). Topologically, residues 178–180 are extracellular; sequence NYT. Residues 181-201 traverse the membrane as a helical segment; the sequence is VYCIFRLLSGMSLASIAINCM. Residues 202–218 are Cytoplasmic-facing; the sequence is TLNMEWMPIHTRAYVGT. Residues 219-239 traverse the membrane as a helical segment; sequence LIGYVYSLGQFLLAGIAYAVP. The Extracellular portion of the chain corresponds to 240–242; that stretch reads HWR. A helical transmembrane segment spans residues 243 to 263; it reads HLQLAVSVPFFVAFIYSWFFI. Residues 264–331 lie on the Cytoplasmic side of the membrane; it reads ESARWYSSSG…ELLRCPTLRR (68 aa). Residues 332–352 form a helical membrane-spanning segment; that stretch reads LFLCLSMLWFATSFAYYGLVM. Residues 353–362 lie on the Extracellular side of the membrane; the sequence is DLQGFGVSMY. Residues 363 to 383 form a helical membrane-spanning segment; it reads LIQVIFGAVDLPAKFVCFLVI. Over 384 to 389 the chain is Cytoplasmic; sequence NSMGRR. A helical membrane pass occupies residues 390–410; that stretch reads PAQLASLLLAGICILVNGIIP. At 411–419 the chain is on the extracellular side; the sequence is RGHTIIRTS. A helical membrane pass occupies residues 420–440; that stretch reads LAVLGKGCLASSFNCIFLYTG. Residues 441 to 450 lie on the Cytoplasmic side of the membrane; the sequence is ELYPTMIRQT. A helical transmembrane segment spans residues 451-471; the sequence is GLGMGSTMARVGSIVSPLISM. At 472-478 the chain is on the extracellular side; it reads TAEFYPS. A helical membrane pass occupies residues 479 to 499; sequence IPLFIFGAVPVAASAVTALLP. Over 500–545 the chain is Cytoplasmic; the sequence is ETLGQPLPDTVQDLKSRSRGKQKQQQLEQQKQMIPLQVSTQEKNGL. Positions 515–545 are disordered; it reads SRSRGKQKQQQLEQQKQMIPLQVSTQEKNGL. The segment covering 522–531 has biased composition (low complexity); that stretch reads KQQQLEQQKQ. The segment covering 536 to 545 has biased composition (polar residues); that stretch reads QVSTQEKNGL.

The protein belongs to the major facilitator (TC 2.A.1) superfamily. Organic cation transporter (TC 2.A.1.19) family. Post-translationally, glycosylated. Glycosylation is necessary for proper targeting of the transporter to the plasma membrane. As to expression, expressed in kidney. In kidney, restricted to the proximal convoluted tubule (representing S1 and S2 segments). In brain, expressed in neurons of the cortex cerebri and hippocampus as well as in the ependymal cell layer of the choroid plexus.

It localises to the basolateral cell membrane. Its subcellular location is the basal cell membrane. The catalysed reaction is (6R)-L-erythro-5,6,7,8-tetrahydrobiopterin(out) + a dicarboxylate(in) = (6R)-L-erythro-5,6,7,8-tetrahydrobiopterin(in) + a dicarboxylate(out). It carries out the reaction L-erythro-7,8-dihydrobiopterin(out) + a dicarboxylate(in) = L-erythro-7,8-dihydrobiopterin(in) + a dicarboxylate(out). It catalyses the reaction L-sepiapterin(out) + a dicarboxylate(in) = L-sepiapterin(in) + a dicarboxylate(out). The enzyme catalyses prostaglandin F2alpha(out) + a dicarboxylate(in) = prostaglandin F2alpha(in) + a dicarboxylate(out). The catalysed reaction is prostaglandin E2(out) + a dicarboxylate(in) = prostaglandin E2(in) + a dicarboxylate(out). It carries out the reaction 3',5'-cyclic AMP(out) + a dicarboxylate(in) = 3',5'-cyclic AMP(in) + a dicarboxylate(out). It catalyses the reaction 3',5'-cyclic GMP(out) + a dicarboxylate(in) = 3',5'-cyclic GMP(in) + a dicarboxylate(out). The enzyme catalyses urate(out) + a dicarboxylate(in) = urate(in) + a dicarboxylate(out). The catalysed reaction is kynurenate(out) + glutarate(in) = kynurenate(in) + glutarate(out). It carries out the reaction (indol-3-yl)acetate(out) + a dicarboxylate(in) = (indol-3-yl)acetate(in) + a dicarboxylate(out). It catalyses the reaction indoxyl sulfate(out) + a dicarboxylate(in) = indoxyl sulfate(in) + a dicarboxylate(out). The enzyme catalyses N-benzoylglycine(out) + a dicarboxylate(in) = N-benzoylglycine(in) + a dicarboxylate(out). The catalysed reaction is 3-carboxy-4-methyl-5-propyl-2-furanpropanoate(out) + a dicarboxylate(in) = 3-carboxy-4-methyl-5-propyl-2-furanpropanoate(in) + a dicarboxylate(out). In terms of biological role, secondary active transporter that functions as a Na(+)-independent organic anion (OA)/dicarboxylate antiporter where the uptake of one molecule of OA into the cell is coupled with an efflux of one molecule of intracellular dicarboxylate such as 2-oxoglutarate or glutarate. Mediates the uptake of OA across the basolateral side of proximal tubule epithelial cells, thereby contributing to the renal elimination of endogenous OA from the systemic circulation into the urine. Functions as a biopterin transporters involved in the uptake and the secretion of coenzymes tetrahydrobiopterin (BH4), dihydrobiopterin (BH2) and sepiapterin to urine, thereby determining baseline levels of blood biopterins. Transports prostaglandin E2 (PGE2) and prostaglandin F2-alpha (PGF2-alpha) and may contribute to their renal excretion. Involved in the transport of neuroactive tryptophan metabolites kynurenate (KYNA) and xanthurenate (XA). May transport glutamate. Also involved in the disposition of uremic toxins and potentially toxic xenobiotics by the renal organic anion secretory pathway, helping reduce their undesired toxicological effects on the body. Uremic toxins include the indoxyl sulfate (IS), hippurate/N-benzoylglycine (HA), indole acetate (IA) and 3-carboxy-4- methyl-5-propyl-2-furanpropionate(CMPF) and urate. Xenobiotics include the mycotoxin ochratoxin (OTA). May also contribute to the transport of organic compounds in testes across the blood-testis-barrier. The protein is Solute carrier family 22 member 6 of Mus musculus (Mouse).